The sequence spans 277 residues: 2-dehydro-3-deoxyphosphooctonate aldolase (277 aa).

The protein belongs to the KdsA family.

It localises to the cytoplasm. The enzyme catalyses D-arabinose 5-phosphate + phosphoenolpyruvate + H2O = 3-deoxy-alpha-D-manno-2-octulosonate-8-phosphate + phosphate. Its pathway is carbohydrate biosynthesis; 3-deoxy-D-manno-octulosonate biosynthesis; 3-deoxy-D-manno-octulosonate from D-ribulose 5-phosphate: step 2/3. It participates in bacterial outer membrane biogenesis; lipopolysaccharide biosynthesis. In Brucella abortus (strain S19), this protein is 2-dehydro-3-deoxyphosphooctonate aldolase.